A 128-amino-acid polypeptide reads, in one-letter code: Iron-sulfur cluster insertion protein ErpA (128 aa).

Positions 56, 120, and 122 each coordinate iron-sulfur cluster.

Belongs to the HesB/IscA family. As to quaternary structure, homodimer. It depends on iron-sulfur cluster as a cofactor.

In terms of biological role, required for insertion of 4Fe-4S clusters for at least IspG. The polypeptide is Iron-sulfur cluster insertion protein ErpA (Xanthomonas euvesicatoria pv. vesicatoria (strain 85-10) (Xanthomonas campestris pv. vesicatoria)).